Reading from the N-terminus, the 141-residue chain is DUF35 domain-containing scaffold protein (141 aa).

Zn(2+) contacts are provided by Cys30, Cys33, Cys44, and Cys47.

This sequence belongs to the scaffold protein DUF35 family. Interacts with acetoacetyl-CoA thiolase and HMG-CoA synthase (HMGCS) that catalyzes the first and second step in the mevalonate pathway, respectively.

In terms of biological role, functions as a scaffold to connect the acetoacetyl-CoA thiolase and HMG-CoA synthase (HMGCS) dimers in the channeling thiolase/HMGCS complex, which allows for efficient coupling of the endergonic thiolase reaction with the exergonic HMGCS reaction. The polypeptide is DUF35 domain-containing scaffold protein (Methanocaldococcus jannaschii (strain ATCC 43067 / DSM 2661 / JAL-1 / JCM 10045 / NBRC 100440) (Methanococcus jannaschii)).